The primary structure comprises 83 residues: U5-theraphotoxin-Hs1b 2 (83 aa).

Positions 1-21 (MQTSMFLTLTGLVLLFVVCYA) are cleaved as a signal peptide. A propeptide spanning residues 22–49 (SESEEKEFPKELLSSIFAADSDFKEEER) is cleaved from the precursor. Cystine bridges form between Cys-51/Cys-63, Cys-56/Cys-68, and Cys-62/Cys-75.

Belongs to the neurotoxin 10 (Hwtx-1) family. 51 (Hntx-8) subfamily. Hntx-8 sub-subfamily. In terms of tissue distribution, expressed by the venom gland.

The protein localises to the secreted. Agglutinates erythrocytes. This chain is U5-theraphotoxin-Hs1b 2, found in Cyriopagopus schmidti (Chinese bird spider).